The following is a 138-amino-acid chain: MLQPARRKYRKEQKGRNTGVATRGNSVAFGDFGLKCTDRGRLTARQIEAARRAISRHVKRGGRIWIRVFPDKPISTKPAEVRMGNGKGNPEYYVAEIQPGKIVFEIVGVPEELAREAFRLAAAKLPLRTTFVSRQIGA.

Residues 1 to 13 show a composition bias toward basic residues; sequence MLQPARRKYRKEQ. The segment at 1 to 22 is disordered; it reads MLQPARRKYRKEQKGRNTGVAT.

The protein belongs to the universal ribosomal protein uL16 family. Part of the 50S ribosomal subunit.

Its function is as follows. Binds 23S rRNA and is also seen to make contacts with the A and possibly P site tRNAs. In Paracidovorax citrulli (strain AAC00-1) (Acidovorax citrulli), this protein is Large ribosomal subunit protein uL16.